Reading from the N-terminus, the 296-residue chain is UDP-N-acetylenolpyruvoylglucosamine reductase (296 aa).

In terms of domain architecture, FAD-binding PCMH-type spans 26 to 191; it reads RIGGPANYFK…LSATFRLSKS (166 aa). Arg170 is a catalytic residue. Residue Cys218 is the Proton donor of the active site. Glu287 is an active-site residue.

Belongs to the MurB family. FAD is required as a cofactor.

It localises to the cytoplasm. The catalysed reaction is UDP-N-acetyl-alpha-D-muramate + NADP(+) = UDP-N-acetyl-3-O-(1-carboxyvinyl)-alpha-D-glucosamine + NADPH + H(+). It functions in the pathway cell wall biogenesis; peptidoglycan biosynthesis. In terms of biological role, cell wall formation. This chain is UDP-N-acetylenolpyruvoylglucosamine reductase, found in Chlamydia felis (strain Fe/C-56) (Chlamydophila felis).